A 262-amino-acid polypeptide reads, in one-letter code: ABSCISIC ACID-INSENSITIVE 5-like protein 3 (262 aa).

Phosphoserine is present on residues Ser21, Ser43, and Ser66. Residue Thr104 is modified to Phosphothreonine. The bZIP domain occupies 190–253; that stretch reads VERRQKRMIK…SEPPPDPKWK (64 aa). Residues 192 to 211 are basic motif; it reads RRQKRMIKNRESAARSRARK. A leucine-zipper region spans residues 218 to 232; the sequence is LEIKVSRLEEENEKL. Over residues 239-252 the composition is skewed to basic and acidic residues; it reads EKILPSEPPPDPKW. The interval 239–262 is disordered; that stretch reads EKILPSEPPPDPKWKLRRTNSASL.

The protein belongs to the bZIP family. ABI5 subfamily. As to quaternary structure, DNA-binding heterodimer with ABI5/DPBF1, DPBF2 or AREB3/DPBF3. Interacts with the AFP proteins AFP2, AFP3 and AFP4. In terms of tissue distribution, predominantly expressed in seeds.

Its subcellular location is the nucleus. Binds to the embryo specification element and the ABA-responsive element (ABRE) of the Dc3 gene promoter and to the ABRE of the Em1 gene promoter. Could participate in abscisic acid-regulated gene expression during seed development. This is ABSCISIC ACID-INSENSITIVE 5-like protein 3 (DPBF4) from Arabidopsis thaliana (Mouse-ear cress).